The following is a 229-amino-acid chain: Cytidylate kinase (229 aa).

12 to 20 provides a ligand contact to ATP; sequence GPSGSGKGT.

It belongs to the cytidylate kinase family. Type 1 subfamily.

It localises to the cytoplasm. The catalysed reaction is CMP + ATP = CDP + ADP. The enzyme catalyses dCMP + ATP = dCDP + ADP. This is Cytidylate kinase from Azotobacter vinelandii (strain DJ / ATCC BAA-1303).